The sequence spans 345 residues: 4-hydroxythreonine-4-phosphate dehydrogenase (345 aa).

2 residues coordinate substrate: histidine 148 and threonine 149. A divalent metal cation is bound by residues histidine 182, histidine 227, and histidine 282. 3 residues coordinate substrate: lysine 290, asparagine 299, and arginine 308.

This sequence belongs to the PdxA family. In terms of assembly, homodimer. It depends on Zn(2+) as a cofactor. The cofactor is Mg(2+). Co(2+) is required as a cofactor.

It is found in the cytoplasm. The enzyme catalyses 4-(phosphooxy)-L-threonine + NAD(+) = 3-amino-2-oxopropyl phosphate + CO2 + NADH. The protein operates within cofactor biosynthesis; pyridoxine 5'-phosphate biosynthesis; pyridoxine 5'-phosphate from D-erythrose 4-phosphate: step 4/5. Its function is as follows. Catalyzes the NAD(P)-dependent oxidation of 4-(phosphooxy)-L-threonine (HTP) into 2-amino-3-oxo-4-(phosphooxy)butyric acid which spontaneously decarboxylates to form 3-amino-2-oxopropyl phosphate (AHAP). This is 4-hydroxythreonine-4-phosphate dehydrogenase from Bradyrhizobium diazoefficiens (strain JCM 10833 / BCRC 13528 / IAM 13628 / NBRC 14792 / USDA 110).